The chain runs to 303 residues: Aspartate carbamoyltransferase catalytic subunit (303 aa).

Arginine 49 and threonine 50 together coordinate carbamoyl phosphate. Lysine 77 contacts L-aspartate. Residues arginine 99, histidine 126, and glutamine 129 each contribute to the carbamoyl phosphate site. L-aspartate-binding residues include arginine 159 and arginine 211. Carbamoyl phosphate contacts are provided by serine 252 and proline 253.

This sequence belongs to the aspartate/ornithine carbamoyltransferase superfamily. ATCase family. As to quaternary structure, heterododecamer (2C3:3R2) of six catalytic PyrB chains organized as two trimers (C3), and six regulatory PyrI chains organized as three dimers (R2).

It catalyses the reaction carbamoyl phosphate + L-aspartate = N-carbamoyl-L-aspartate + phosphate + H(+). Its pathway is pyrimidine metabolism; UMP biosynthesis via de novo pathway; (S)-dihydroorotate from bicarbonate: step 2/3. Its function is as follows. Catalyzes the condensation of carbamoyl phosphate and aspartate to form carbamoyl aspartate and inorganic phosphate, the committed step in the de novo pyrimidine nucleotide biosynthesis pathway. This chain is Aspartate carbamoyltransferase catalytic subunit, found in Listeria welshimeri serovar 6b (strain ATCC 35897 / DSM 20650 / CCUG 15529 / CIP 8149 / NCTC 11857 / SLCC 5334 / V8).